A 105-amino-acid chain; its full sequence is Small ribosomal subunit protein uS10 (105 aa).

Belongs to the universal ribosomal protein uS10 family. Part of the 30S ribosomal subunit.

Its function is as follows. Involved in the binding of tRNA to the ribosomes. In Agathobacter rectalis (strain ATCC 33656 / DSM 3377 / JCM 17463 / KCTC 5835 / VPI 0990) (Eubacterium rectale), this protein is Small ribosomal subunit protein uS10.